Here is an 83-residue protein sequence, read N- to C-terminus: Small ribosomal subunit protein uS17 (83 aa).

It belongs to the universal ribosomal protein uS17 family. In terms of assembly, part of the 30S ribosomal subunit.

In terms of biological role, one of the primary rRNA binding proteins, it binds specifically to the 5'-end of 16S ribosomal RNA. The chain is Small ribosomal subunit protein uS17 from Zymomonas mobilis subsp. mobilis (strain ATCC 31821 / ZM4 / CP4).